We begin with the raw amino-acid sequence, 259 residues long: 14-3-3-like protein (259 aa).

This sequence belongs to the 14-3-3 family.

This chain is 14-3-3-like protein, found in Helianthus annuus (Common sunflower).